A 325-amino-acid polypeptide reads, in one-letter code: Release factor glutamine methyltransferase (325 aa).

Residues Gly141–Gly145, Asp164, Trp193, and Asn207 each bind S-adenosyl-L-methionine. Asn207–Tyr210 provides a ligand contact to substrate. Positions Leu306–Ala325 are disordered.

It belongs to the protein N5-glutamine methyltransferase family. PrmC subfamily.

The enzyme catalyses L-glutaminyl-[peptide chain release factor] + S-adenosyl-L-methionine = N(5)-methyl-L-glutaminyl-[peptide chain release factor] + S-adenosyl-L-homocysteine + H(+). In terms of biological role, methylates the class 1 translation termination release factors RF1/PrfA and RF2/PrfB on the glutamine residue of the universally conserved GGQ motif. This Rhodospirillum rubrum (strain ATCC 11170 / ATH 1.1.1 / DSM 467 / LMG 4362 / NCIMB 8255 / S1) protein is Release factor glutamine methyltransferase.